We begin with the raw amino-acid sequence, 323 residues long: Beta-ketoacyl-[acyl-carrier-protein] synthase III (323 aa).

Active-site residues include Cys113 and His250. An ACP-binding region spans residues 251-255; the sequence is QANRR. Asn280 is a catalytic residue.

Belongs to the thiolase-like superfamily. FabH family. As to quaternary structure, homodimer.

It localises to the cytoplasm. The enzyme catalyses malonyl-[ACP] + acetyl-CoA + H(+) = 3-oxobutanoyl-[ACP] + CO2 + CoA. It functions in the pathway lipid metabolism; fatty acid biosynthesis. Functionally, catalyzes the condensation reaction of fatty acid synthesis by the addition to an acyl acceptor of two carbons from malonyl-ACP. Catalyzes the first condensation reaction which initiates fatty acid synthesis and may therefore play a role in governing the total rate of fatty acid production. Possesses both acetoacetyl-ACP synthase and acetyl transacylase activities. Its substrate specificity determines the biosynthesis of branched-chain and/or straight-chain of fatty acids. In Allorhizobium ampelinum (strain ATCC BAA-846 / DSM 112012 / S4) (Agrobacterium vitis (strain S4)), this protein is Beta-ketoacyl-[acyl-carrier-protein] synthase III.